The following is a 327-amino-acid chain: Cobalamin biosynthesis protein CobD (327 aa).

4 helical membrane-spanning segments follow: residues 60–80 (GMWL…VLEL), 82–102 (LPFA…VLLA), 159–179 (DGIV…LFAY), and 304–324 (LFWS…LIGL).

Belongs to the CobD/CbiB family.

Its subcellular location is the cell membrane. It functions in the pathway cofactor biosynthesis; adenosylcobalamin biosynthesis. Converts cobyric acid to cobinamide by the addition of aminopropanol on the F carboxylic group. The chain is Cobalamin biosynthesis protein CobD from Brucella anthropi (strain ATCC 49188 / DSM 6882 / CCUG 24695 / JCM 21032 / LMG 3331 / NBRC 15819 / NCTC 12168 / Alc 37) (Ochrobactrum anthropi).